The chain runs to 95 residues: Co-chaperonin GroES (95 aa).

This sequence belongs to the GroES chaperonin family. In terms of assembly, heptamer of 7 subunits arranged in a ring. Interacts with the chaperonin GroEL.

The protein localises to the cytoplasm. In terms of biological role, together with the chaperonin GroEL, plays an essential role in assisting protein folding. The GroEL-GroES system forms a nano-cage that allows encapsulation of the non-native substrate proteins and provides a physical environment optimized to promote and accelerate protein folding. GroES binds to the apical surface of the GroEL ring, thereby capping the opening of the GroEL channel. In Rhizorhabdus wittichii (strain DSM 6014 / CCUG 31198 / JCM 15750 / NBRC 105917 / EY 4224 / RW1) (Sphingomonas wittichii), this protein is Co-chaperonin GroES.